Consider the following 236-residue polypeptide: ATP synthase subunit a, chloroplastic (236 aa).

Helical transmembrane passes span 25-45 (MHGQ…AFAV), 87-107 (FIGT…LIPW), 123-143 (DINT…YAGL), 180-202 (LFGN…PLVI), and 210-230 (GLFT…AYIG).

The protein belongs to the ATPase A chain family. As to quaternary structure, F-type ATPases have 2 components, CF(1) - the catalytic core - and CF(0) - the membrane proton channel. CF(1) has five subunits: alpha(3), beta(3), gamma(1), delta(1), epsilon(1). CF(0) has four main subunits: a, b, b' and c.

The protein resides in the plastid. Its subcellular location is the chloroplast thylakoid membrane. Its function is as follows. Key component of the proton channel; it plays a direct role in the translocation of protons across the membrane. The sequence is that of ATP synthase subunit a, chloroplastic from Ostreococcus tauri.